The sequence spans 30 residues: Neurotoxin II.22.5 (30 aa).

Residues 1–30 (KEGYIVNYHTGCKYTCAKLGDNDYCLRECK) form the LCN-type CS-alpha/beta domain.

This sequence belongs to the long (4 C-C) scorpion toxin superfamily. Sodium channel inhibitor family. Beta subfamily. Expressed by the venom gland.

The protein resides in the secreted. Its function is as follows. Binds to sodium channels (Nav) and inhibits the inactivation of the activated channels, thereby blocking neuronal transmission. The chain is Neurotoxin II.22.5 from Centruroides tecomanus (Scorpion).